The chain runs to 356 residues: tRNA N6-adenosine threonylcarbamoyltransferase (356 aa).

Positions 116 and 120 each coordinate Fe cation. Substrate-binding positions include 139–143 (IVSGG), Asp174, Gly187, Asp191, and Asn281. Asp309 contacts Fe cation.

Belongs to the KAE1 / TsaD family. Fe(2+) serves as cofactor.

The protein resides in the cytoplasm. It catalyses the reaction L-threonylcarbamoyladenylate + adenosine(37) in tRNA = N(6)-L-threonylcarbamoyladenosine(37) in tRNA + AMP + H(+). Required for the formation of a threonylcarbamoyl group on adenosine at position 37 (t(6)A37) in tRNAs that read codons beginning with adenine. Is involved in the transfer of the threonylcarbamoyl moiety of threonylcarbamoyl-AMP (TC-AMP) to the N6 group of A37, together with TsaE and TsaB. TsaD likely plays a direct catalytic role in this reaction. This chain is tRNA N6-adenosine threonylcarbamoyltransferase, found in Frankia casuarinae (strain DSM 45818 / CECT 9043 / HFP020203 / CcI3).